Here is a 494-residue protein sequence, read N- to C-terminus: Zinc finger and SCAN domain-containing protein 30 (494 aa).

An SCAN box domain is found at 48-130; the sequence is RQKFRQFSYS…TMLEELEKEL (83 aa). Lys-197 is covalently cross-linked (Glycyl lysine isopeptide (Lys-Gly) (interchain with G-Cter in SUMO2)). 7 C2H2-type zinc fingers span residues 301–323, 329–351, 357–379, 385–407, 413–435, 441–463, and 469–491; these read YECF…QRIH, YACK…QRIH, YECC…RRIH, YECG…KKIH, YECI…QRIH, YECN…QRIH, and YECS…QRTH.

This sequence belongs to the krueppel C2H2-type zinc-finger protein family.

It localises to the nucleus. May be involved in transcriptional regulation. The sequence is that of Zinc finger and SCAN domain-containing protein 30 (ZSCAN30) from Homo sapiens (Human).